Here is an 808-residue protein sequence, read N- to C-terminus: Tegument protein UL47 homolog (808 aa).

2 disordered regions span residues 1 to 21 (MQMP…RENQ) and 77 to 266 (PNEE…SFGE). The segment covering 83 to 92 (DNSRGRDRTR) has biased composition (basic and acidic residues). Residues 133–160 (SRARSRRRSSSRRRHRNASMHMHFRGGS) are compositionally biased toward basic residues. Polar residues predominate over residues 162 to 171 (RSATGSQNLI). Positions 197 to 214 (RSSRVRRRHRRSSRRRGP) are enriched in basic residues. Positions 235 to 259 (PISDIDQKRLRKNSDTSSRGTRESP) are enriched in basic and acidic residues.

Belongs to the alphaherpesvirinae HHV-1 UL47 family. Interacts with US3 kinase. Interacts with UL31 and UL34; these interactions seem important for efficient virion nuclear egress. Interacts with UL41/VHS. In terms of processing, phosphorylated by US3. This phosphorylation is required for proper nuclear localization. O-glycosylated.

Its subcellular location is the virion tegument. The protein resides in the host nucleus. It is found in the host cytoplasm. Functionally, tegument protein that can bind to various RNA transcripts. Plays a role in the attenuation of selective viral and cellular mRNA degradation by modulating the activity of host shutoff RNase UL41/VHS. Also plays a role in the primary envelopment of virions in the perinuclear space, probably by interacting with two nuclear egress proteins UL31 and UL34. Plays an important role in the splicing of glycoprotein/gC transcripts and thereby participates in bird-to-bird viral transmission. In Gallus gallus (Chicken), this protein is Tegument protein UL47 homolog (MDV060).